The sequence spans 390 residues: MSTHFDVIVVGAGSMGMAAGYQLAKQGVKTLLVDAFDPPHTNGSHHGDTRIIRHAYGEGREYVPLALRSQELWYELEKETHHKIFTKTGVLVFGPKGESAFVAETMEAAKEHSLTVDLLEGDEINKRWPGITVPENYNAIFEPNSGVLFSENCIRAYRELAEARGAKVLTHTRVEDFDISPDSVKIETANGSYTADKLIVSMGAWNSKLLSKLNLDIPLQPYRQVVGFFESDESKYSNDIDFPGFMVEVPNGIYYGFPSFGGCGLKLGYHTFGQKIDPDTINREFGVYPEDESNLRAFLEEYMPGANGELKRGAVCMYTKTLDEHFIIDLHPEHSNVVIAAGFSGHGFKFSSGVGEVLSQLALTGKTEHDISIFSINRPALKESLQKTTI.

Position 6–36 (6–36 (DVIVVGAGSMGMAAGYQLAKQGVKTLLVDAF)) interacts with FAD. Cysteine 316 bears the S-8alpha-FAD cysteine mark.

As to quaternary structure, monomer. Requires FAD as cofactor.

It localises to the cytoplasm. The enzyme catalyses sarcosine + O2 + H2O = formaldehyde + glycine + H2O2. Its activity is regulated as follows. Pyrrole-2-carboxylate is a competitive inhibitor. N-(cyclopropyl)glycine (CPG) is a mechanism-based inhibitor and inactivates the enzyme by covalently modifying the flavin. Catalyzes the oxidative demethylation of sarcosine. Can also oxidize other secondary amino acids such as N-methyl-L-alanine. The chain is Monomeric sarcosine oxidase (soxA) from Bacillus sp. (strain B-0618).